A 625-amino-acid polypeptide reads, in one-letter code: Protein SUPPRESSOR OF GENE SILENCING 3 (625 aa).

Disordered regions lie at residues 1–20, 30–148, and 161–195; these read MSSRAGPMSKEKNVQGGYRP, AGTR…SAQH, and VDNASEEENDSDALDDSDDDLASDDYDSDVSQKSH. Over residues 54–70 the composition is skewed to polar residues; sequence KPGNTSGKTWVSQNSNP. Residues 80–94 are compositionally biased toward low complexity; sequence GRGSNVSGRGNNVSG. Over residues 161–188 the composition is skewed to acidic residues; that stretch reads VDNASEEENDSDALDDSDDDLASDDYDS. Coiled-coil stretches lie at residues 452 to 533 and 564 to 615; these read KNKL…QQQE and IEFQ…EQLM.

The protein belongs to the SGS3 family. As to quaternary structure, interacts with begomoviruses protein V2. Interacts with SGIP1 in cytoplasmic granules.

The protein localises to the cytoplasm. It is found in the perinuclear region. It localises to the cytoplasmic granule. Its function is as follows. Required for post-transcriptional gene silencing and natural virus resistance. May bind nucleic acids and is essential for the biogenesis of trans-acting siRNAs but is not required for silencing induced by IR-PTGS. Involved in the juvenile-to-adult transition regulation. In case of begomoviruses infection, it is targeted by the viral protein V2 leading to suppression of post-transcriptional gene silencing. Involved in the mechanisms necessary for quick response to heat and subsequent heritable transgenerational memory of heat acclimation (global warming) such as early flowering and attenuated immunity; this process includes epigenetic regulation as well as post-transcriptional gene silencing (PTGS). In response to heat, HSFA2 is activated and promotes the expression of REF6 which in turn derepresses HSFA2, thus establishing an inheritable feedback loop able to trigger SGIP1 and subsequent SGIP1-mediated SGS3 degradation; this prevents the biosynthesis of trans-acting siRNA (tasiRNA) and leads to the release of HTT5, which drives early flowering but attenuates immunity. The polypeptide is Protein SUPPRESSOR OF GENE SILENCING 3 (Arabidopsis thaliana (Mouse-ear cress)).